Reading from the N-terminus, the 357-residue chain is DNA integrity scanning protein DisA (357 aa).

The 139-residue stretch at 8–146 (VKSMINILQL…GNLRYTLKDI (139 aa)) folds into the DAC domain. Residues G75, L93, and 106–110 (MRHRT) contribute to the ATP site.

Belongs to the DisA family. In terms of assembly, homooctamer. Mg(2+) serves as cofactor.

The catalysed reaction is 2 ATP = 3',3'-c-di-AMP + 2 diphosphate. Its function is as follows. Participates in a DNA-damage check-point that is active prior to asymmetric division when DNA is damaged. DisA forms globular foci that rapidly scan along the chromosomes during sporulation, searching for lesions. When a lesion is present, DisA pauses at the lesion site. This triggers a cellular response that culminates in a temporary block in sporulation initiation. In terms of biological role, also has diadenylate cyclase activity, catalyzing the condensation of 2 ATP molecules into cyclic di-AMP (c-di-AMP). c-di-AMP acts as a signaling molecule that couples DNA integrity with progression of sporulation. The rise in c-di-AMP level generated by DisA while scanning the chromosome, operates as a positive signal that advances sporulation; upon encountering a lesion, the DisA focus arrests at the damaged site and halts c-di-AMP synthesis. This is DNA integrity scanning protein DisA from Bacillus cereus (strain G9842).